The primary structure comprises 361 residues: Protein SSUH2 homolog (361 aa).

It is found in the cytoplasm. Its subcellular location is the nucleus. Functionally, plays a role in odontogenesis. In Danio rerio (Zebrafish), this protein is Protein SSUH2 homolog.